The following is a 58-amino-acid chain: Large ribosomal subunit protein bL32c (58 aa).

Disordered regions lie at residues 1-21 (MAVP…SQWM) and 34-58 (LAGR…MQPN). The span at 44–58 (QMQPTQMQPTQMQPN) shows a compositional bias: low complexity.

It belongs to the bacterial ribosomal protein bL32 family.

It is found in the plastid. The protein localises to the chloroplast. This chain is Large ribosomal subunit protein bL32c, found in Cyanidioschyzon merolae (strain NIES-3377 / 10D) (Unicellular red alga).